The following is a 190-amino-acid chain: Segregation and condensation protein B (190 aa).

This sequence belongs to the ScpB family. As to quaternary structure, homodimer. Homodimerization may be required to stabilize the binding of ScpA to the Smc head domains. Component of a cohesin-like complex composed of ScpA, ScpB and the Smc homodimer, in which ScpA and ScpB bind to the head domain of Smc. The presence of the three proteins is required for the association of the complex with DNA.

The protein resides in the cytoplasm. In terms of biological role, participates in chromosomal partition during cell division. May act via the formation of a condensin-like complex containing Smc and ScpA that pull DNA away from mid-cell into both cell halves. This Alkaliphilus metalliredigens (strain QYMF) protein is Segregation and condensation protein B.